A 313-amino-acid polypeptide reads, in one-letter code: Ribosomal RNA small subunit methyltransferase H (313 aa).

S-adenosyl-L-methionine contacts are provided by residues 35-37 (GGH), D55, F80, D102, and Q109.

It belongs to the methyltransferase superfamily. RsmH family.

The protein resides in the cytoplasm. The enzyme catalyses cytidine(1402) in 16S rRNA + S-adenosyl-L-methionine = N(4)-methylcytidine(1402) in 16S rRNA + S-adenosyl-L-homocysteine + H(+). In terms of biological role, specifically methylates the N4 position of cytidine in position 1402 (C1402) of 16S rRNA. The chain is Ribosomal RNA small subunit methyltransferase H from Shewanella violacea (strain JCM 10179 / CIP 106290 / LMG 19151 / DSS12).